A 116-amino-acid polypeptide reads, in one-letter code: Large ribosomal subunit protein bL20c (116 aa).

It belongs to the bacterial ribosomal protein bL20 family.

The protein resides in the plastid. Its subcellular location is the chloroplast. In terms of biological role, binds directly to 23S ribosomal RNA and is necessary for the in vitro assembly process of the 50S ribosomal subunit. It is not involved in the protein synthesizing functions of that subunit. This Rhodomonas salina (Cryptomonas salina) protein is Large ribosomal subunit protein bL20c.